The sequence spans 517 residues: GMP synthase [glutamine-hydrolyzing] (517 aa).

Residues 11–202 (KIIVLDFGSQ…AFDVCGAKDN (192 aa)) enclose the Glutamine amidotransferase type-1 domain. The active-site Nucleophile is the cysteine 88. Catalysis depends on residues histidine 176 and glutamate 178. In terms of domain architecture, GMPS ATP-PPase spans 203 to 392 (WTMDDFIKLS…LGLPHDLVWR (190 aa)). 230–236 (SGGVDSS) serves as a coordination point for ATP.

In terms of assembly, homodimer.

The enzyme catalyses XMP + L-glutamine + ATP + H2O = GMP + L-glutamate + AMP + diphosphate + 2 H(+). It functions in the pathway purine metabolism; GMP biosynthesis; GMP from XMP (L-Gln route): step 1/1. In terms of biological role, catalyzes the synthesis of GMP from XMP. The sequence is that of GMP synthase [glutamine-hydrolyzing] from Lactobacillus delbrueckii subsp. bulgaricus (strain ATCC 11842 / DSM 20081 / BCRC 10696 / JCM 1002 / NBRC 13953 / NCIMB 11778 / NCTC 12712 / WDCM 00102 / Lb 14).